The primary structure comprises 673 residues: UvrABC system protein B (673 aa).

The region spanning E26–R183 is the Helicase ATP-binding domain. An ATP-binding site is contributed by G39 to T46. Positions Y92–V115 match the Beta-hairpin motif. The 167-residue stretch at Q431–L597 folds into the Helicase C-terminal domain. A UVR domain is found at Q633–L668.

The protein belongs to the UvrB family. As to quaternary structure, forms a heterotetramer with UvrA during the search for lesions. Interacts with UvrC in an incision complex.

The protein resides in the cytoplasm. Functionally, the UvrABC repair system catalyzes the recognition and processing of DNA lesions. A damage recognition complex composed of 2 UvrA and 2 UvrB subunits scans DNA for abnormalities. Upon binding of the UvrA(2)B(2) complex to a putative damaged site, the DNA wraps around one UvrB monomer. DNA wrap is dependent on ATP binding by UvrB and probably causes local melting of the DNA helix, facilitating insertion of UvrB beta-hairpin between the DNA strands. Then UvrB probes one DNA strand for the presence of a lesion. If a lesion is found the UvrA subunits dissociate and the UvrB-DNA preincision complex is formed. This complex is subsequently bound by UvrC and the second UvrB is released. If no lesion is found, the DNA wraps around the other UvrB subunit that will check the other stand for damage. The polypeptide is UvrABC system protein B (Enterobacter sp. (strain 638)).